Here is a 449-residue protein sequence, read N- to C-terminus: Exodeoxyribonuclease 7 large subunit (449 aa).

The protein belongs to the XseA family. In terms of assembly, heterooligomer composed of large and small subunits.

The protein resides in the cytoplasm. It catalyses the reaction Exonucleolytic cleavage in either 5'- to 3'- or 3'- to 5'-direction to yield nucleoside 5'-phosphates.. Functionally, bidirectionally degrades single-stranded DNA into large acid-insoluble oligonucleotides, which are then degraded further into small acid-soluble oligonucleotides. In Salmonella paratyphi A (strain ATCC 9150 / SARB42), this protein is Exodeoxyribonuclease 7 large subunit.